We begin with the raw amino-acid sequence, 157 residues long: Ribonuclease H (157 aa).

Residues 1-146 (MPELFAYTDG…ADALAREGMA (146 aa)) enclose the RNase H type-1 domain. 4 residues coordinate Mg(2+): Asp9, Glu52, Asp74, and Asp138.

The protein belongs to the RNase H family. As to quaternary structure, monomer. It depends on Mg(2+) as a cofactor.

Its subcellular location is the cytoplasm. The catalysed reaction is Endonucleolytic cleavage to 5'-phosphomonoester.. In terms of biological role, endonuclease that specifically degrades the RNA of RNA-DNA hybrids. The polypeptide is Ribonuclease H (Dinoroseobacter shibae (strain DSM 16493 / NCIMB 14021 / DFL 12)).